We begin with the raw amino-acid sequence, 549 residues long: Arginine--tRNA ligase (549 aa).

The short motif at 132–142 is the 'HIGH' region element; that stretch reads ANPTGPLHLAH.

It belongs to the class-I aminoacyl-tRNA synthetase family. In terms of assembly, monomer.

It localises to the cytoplasm. It carries out the reaction tRNA(Arg) + L-arginine + ATP = L-arginyl-tRNA(Arg) + AMP + diphosphate. This Renibacterium salmoninarum (strain ATCC 33209 / DSM 20767 / JCM 11484 / NBRC 15589 / NCIMB 2235) protein is Arginine--tRNA ligase.